The sequence spans 253 residues: DNA repair protein RecO (253 aa).

The protein belongs to the RecO family.

Functionally, involved in DNA repair and RecF pathway recombination. The sequence is that of DNA repair protein RecO from Dehalococcoides mccartyi (strain ATCC BAA-2100 / JCM 16839 / KCTC 5957 / BAV1).